The following is a 248-amino-acid chain: MSFVVIIPARFSSTRLPGKPLVDINGKPMIVHVLERARESGAERIIVATDHEDVARAVEAAGGEVCMTRADHQSGTERLAEVVEKCGFSDDTVIVNVQGDEPMIPAVIIRQVAENLAQRQVGMATLAVPIHSAEEAFNPNAVKVVLDAEGYALYFSRATIPWDRDRFAKSLETVGDTCLRHLGIYGYRAGFIRRYVSWQPSPLEHIEMLEQLRVLWYGEKIHVAVAKAVPGTGVDTADDLERVRAEMR.

It belongs to the KdsB family.

Its subcellular location is the cytoplasm. The enzyme catalyses 3-deoxy-alpha-D-manno-oct-2-ulosonate + CTP = CMP-3-deoxy-beta-D-manno-octulosonate + diphosphate. It functions in the pathway nucleotide-sugar biosynthesis; CMP-3-deoxy-D-manno-octulosonate biosynthesis; CMP-3-deoxy-D-manno-octulosonate from 3-deoxy-D-manno-octulosonate and CTP: step 1/1. Its pathway is bacterial outer membrane biogenesis; lipopolysaccharide biosynthesis. Functionally, activates KDO (a required 8-carbon sugar) for incorporation into bacterial lipopolysaccharide in Gram-negative bacteria. This Salmonella agona (strain SL483) protein is 3-deoxy-manno-octulosonate cytidylyltransferase.